The sequence spans 555 residues: Suppressor of tumorigenicity 7 protein-like (555 aa).

The next 2 helical transmembrane spans lie at 36–56 (GLAG…LYAL) and 80–100 (FYVA…IFEW). The interval 126–148 (TESSISEPGSPSNNRESETSRQN) is disordered.

The protein belongs to the ST7 family.

The protein resides in the membrane. The protein is Suppressor of tumorigenicity 7 protein-like (ST7L) of Bos taurus (Bovine).